A 195-amino-acid chain; its full sequence is Mannitol operon repressor (195 aa).

Belongs to the MtlR/FumE family. Homodimer. Can also form higher level multimer aggregates.

Functionally, involved in the repression of the expression of the mannitol mtlADR operon. Does not bind the operator/promoter regulatory region of this operon. Therefore, seems to belong to a new class of transcription factors in bacteria that may regulate gene expression indirectly, perhaps as a part of a larger transcriptional complex. The polypeptide is Mannitol operon repressor (Escherichia coli O6:H1 (strain CFT073 / ATCC 700928 / UPEC)).